The chain runs to 221 residues: Large ribosomal subunit protein uL4 (221 aa).

The segment at 47-77 (GTASTKTRGEVSGGGRKPWIQKHTGRARQGS) is disordered.

It belongs to the universal ribosomal protein uL4 family. In terms of assembly, part of the 50S ribosomal subunit.

Functionally, one of the primary rRNA binding proteins, this protein initially binds near the 5'-end of the 23S rRNA. It is important during the early stages of 50S assembly. It makes multiple contacts with different domains of the 23S rRNA in the assembled 50S subunit and ribosome. Its function is as follows. Forms part of the polypeptide exit tunnel. The chain is Large ribosomal subunit protein uL4 from Thermosipho melanesiensis (strain DSM 12029 / CIP 104789 / BI429).